The sequence spans 384 residues: Putative odorant receptor 98b (384 aa).

Over 1–34 (MLTDKFLRLQSALFRLLGLELLHEQDVGHRYPWR) the chain is Cytoplasmic. A helical transmembrane segment spans residues 35–55 (SICCILSVASFMPLTIAFGLQ). The Extracellular segment spans residues 56-66 (NVQNVEQLTDS). The chain crosses the membrane as a helical span at residues 67–87 (LCSVLVDLLALCKIGLFLWLY). The Cytoplasmic segment spans residues 88–128 (KDFKFLIGQFYCVLQTETHTAVAEMIVTRESRRDQFISAMY). A helical transmembrane segment spans residues 129 to 149 (AYCFITAGLSACLMSPLSMLI). Residues 150–177 (SYQRTGELQPKFPFPSVYPWDNMKLSNY) are Extracellular-facing. A helical transmembrane segment spans residues 178–198 (IISYFWNVCAALGVALPTVCV). The Cytoplasmic portion of the chain corresponds to 199–258 (DTLFCSLSHNLCALFQIARHKMMHFEGRNTKETHENLKHVFQLYALCLNLGHFLNEYFRP). A helical membrane pass occupies residues 259–279 (LICQFVAASLHLCVLCYQLSA). Residues 280–284 (NILQP) lie on the Extracellular side of the membrane. A helical membrane pass occupies residues 285 to 305 (ALLFYAAFTAAVVGQVSIYCF). At 306–329 (CGSSIHSECQLFGQAIYESSWPHL) the chain is on the cytoplasmic side. Residues 330 to 350 (LQENLQLVSSLKIAMMRSSLG) form a helical membrane-spanning segment. The Extracellular portion of the chain corresponds to 351–384 (CPIDGYFFEANRETLITVSKAFIKVSKKTPQVND).

It belongs to the insect chemoreceptor superfamily. Heteromeric odorant receptor channel (TC 1.A.69) family. Or1a subfamily. As to quaternary structure, interacts with Orco. Complexes exist early in the endomembrane system in olfactory sensory neurons (OSNs), coupling these complexes to the conserved ciliary trafficking pathway.

The protein resides in the cell membrane. In terms of biological role, odorant receptor which mediates acceptance or avoidance behavior, depending on its substrates. The odorant receptor repertoire encodes a large collection of odor stimuli that vary widely in identity, intensity, and duration. May form a complex with Orco to form odorant-sensing units, providing sensitive and prolonged odorant signaling and calcium permeability. The protein is Putative odorant receptor 98b (Or98b) of Drosophila melanogaster (Fruit fly).